Consider the following 887-residue polypeptide: MTNQTPMMQQYLKIKSQYQDCLLFFRLGDFYEMFFEDAKVASRVLEITLTKRDAKKEDPIPMCGVPYHSADGYIETLISNGYKVAICEQMEDPRQTKGMVRREVVRIVTPGTVMDQGGVDEKQNNYILSFIQSASMYALSYCDVSTGELKVTHFEDEATLINEITTINPNEIVVKEAIGESLKRQISLTTETITVLPDISDVKYDVNTTNDSHLYHVTQLLLDYVYHTQKRDLSHIESVITYEAVDFMKMDFYAKRNLELTESIRLKSKKGTLLWLMDETKTPMGARRLKQWIDRPLIQKKQIESRLDTVDQFINHFIERDTLRGYLNQVYDIERLVGRVSYGNVNARDLIQLKHSISEIPNIKNLLQAFDEQMTAQFEALEPLDDLLNLLEESLKEEPPISVKEGGLFKTGFNETLDSYLEASKNGKNWLAELQTKERQRTGIKSLKISFNKVFGYFIEITRANLQGFDPTEFGYHRKQTLSNAERFITDELKEKEDIILGAEDKAIELEYQLFVQLREQIKAYTERLQKQAKVISELDCLQSFAEIAQKYNYARPTFSEDKTLELVNSRHPVVERVMDHNDYVPNDCELDKETFIYLITGPNMSGKSTYMRQVAIISIMAQMGAYVPCESAILPVFDQIFTRIGAADDLVSGKSTFMVEMLEAQKALAHATEHSLIIFDEIGRGTSTYDGLALAQAMIEYVAHTSHAKTLFSTHYHELTTLDQSLACLKNVHVAANEYNGELIFLHKVKDGAVDDSYGIQVAKLAHLPVEVINRVQVILDAFEQSNNQTNNKNTMNHVDIPTDKNLNASSDEVTEIKATYYVDNEQSAATQHAKSDGQFEQAAFDLFDSPAKQSEIENEIKTLNLSNMTPIEALVKLSELQKQLK.

602 to 609 is a binding site for ATP; it reads GPNMSGKS.

It belongs to the DNA mismatch repair MutS family.

Its function is as follows. This protein is involved in the repair of mismatches in DNA. It is possible that it carries out the mismatch recognition step. This protein has a weak ATPase activity. The polypeptide is DNA mismatch repair protein MutS (Staphylococcus saprophyticus subsp. saprophyticus (strain ATCC 15305 / DSM 20229 / NCIMB 8711 / NCTC 7292 / S-41)).